A 333-amino-acid polypeptide reads, in one-letter code: DNA-directed RNA polymerase subunit alpha (333 aa).

An alpha N-terminal domain (alpha-NTD) region spans residues 1–234; the sequence is MQISVNEFLT…QQLAAFVDLK (234 aa). An alpha C-terminal domain (alpha-CTD) region spans residues 248 to 333; the sequence is IDPILLRPVD…SLKKDDKATA (86 aa).

Belongs to the RNA polymerase alpha chain family. As to quaternary structure, homodimer. The RNAP catalytic core consists of 2 alpha, 1 beta, 1 beta' and 1 omega subunit. When a sigma factor is associated with the core the holoenzyme is formed, which can initiate transcription.

It catalyses the reaction RNA(n) + a ribonucleoside 5'-triphosphate = RNA(n+1) + diphosphate. DNA-dependent RNA polymerase catalyzes the transcription of DNA into RNA using the four ribonucleoside triphosphates as substrates. This chain is DNA-directed RNA polymerase subunit alpha, found in Pseudomonas fluorescens (strain ATCC BAA-477 / NRRL B-23932 / Pf-5).